A 965-amino-acid chain; its full sequence is Transmembrane channel-like protein 5 (965 aa).

2 stretches are compositionally biased toward polar residues: residues 1–10 (MSSFHKNSSY) and 20–31 (SGSQNHTQNYLR). Residues 1–235 (MSSFHKNSSY…GAEEGDVYSP (235 aa)) are disordered. The Extracellular segment spans residues 1–417 (MSSFHKNSSY…YFSFLRWLLK (417 aa)). Over residues 61–70 (TNPDYHHSLA) the composition is skewed to basic and acidic residues. Residues 166–181 (QGNSYHSGPRSHSNLP) show a composition bias toward polar residues. Phosphoserine is present on Ser248. Residues 418-438 (FNIFSFVMNFSFIIIPQFTVG) form a helical membrane-spanning segment. At 439–444 (EKNTLQ) the chain is on the cytoplasmic side. A helical membrane pass occupies residues 445–467 (FTGLEFFTGAGYFRETVMYYGFY). Topologically, residues 468 to 484 (TNSTIRHRMGGASYNMQ) are extracellular. The helical transmembrane segment at 485–505 (LAYIFTIGACLVICFFSLLFS) threads the bilayer. At 506–578 (MAKYFRNNFI…NQKLTRFSVH (73 aa)) the chain is on the cytoplasmic side. The helical transmembrane segment at 579-599 (VAAWLVSTGITAACCVAVYYL) threads the bilayer. Over 600–613 (AEYNSEFLKTHKNP) the chain is Extracellular. Residues 614–634 (GAVLLLPFVVSCINLAVPRFY) form a helical membrane-spanning segment. Residues 635–657 (SMFRLVERYEIPRQEVYVLLIRN) are Cytoplasmic-facing. Residues 658 to 678 (IFLKISIVGILCYYWLNIVAL) traverse the membrane as a helical segment. Residues 679 to 691 (SGEECWETLIGQD) lie on the Extracellular side of the membrane. A helical transmembrane segment spans residues 692 to 712 (IYRLLLMDFVFSLADSLLGEF). The Cytoplasmic segment spans residues 713 to 747 (LRRLIGMKFITSLSLQEFDIARNVLELIYAQTLAW). Residues 748 to 768 (LGIFFCPLLPFIQMITLFIMF) form a helical membrane-spanning segment. The Extracellular segment spans residues 769 to 794 (YVKNVSLMMNFQPPSKAWRASQMITF). A helical membrane pass occupies residues 795–815 (FIFLLFFPSFTGVLCTLAITI). Residues 816–859 (WRLKPSADCGPFRGLPSFIQSIYSWIDTLSHRPGYLWVVWIYQN) lie on the Cytoplasmic side of the membrane. The chain crosses the membrane as a helical span at residues 860–880 (LIGSVHFFFILTLIVLIITYL). Topologically, residues 881–965 (YWQITEGRKV…RSMQEENAIA (85 aa)) are extracellular.

Belongs to the TMC family.

It localises to the membrane. In terms of biological role, probable component of an ion channel. Molecular function hasn't been characterized yet. This chain is Transmembrane channel-like protein 5, found in Rattus norvegicus (Rat).